Here is a 313-residue protein sequence, read N- to C-terminus: Porphobilinogen deaminase (313 aa).

The residue at position 241 (Cys-241) is an S-(dipyrrolylmethanemethyl)cysteine.

Belongs to the HMBS family. Monomer. Dipyrromethane serves as cofactor.

The catalysed reaction is 4 porphobilinogen + H2O = hydroxymethylbilane + 4 NH4(+). Its pathway is porphyrin-containing compound metabolism; protoporphyrin-IX biosynthesis; coproporphyrinogen-III from 5-aminolevulinate: step 2/4. In terms of biological role, tetrapolymerization of the monopyrrole PBG into the hydroxymethylbilane pre-uroporphyrinogen in several discrete steps. This chain is Porphobilinogen deaminase, found in Sulfurimonas denitrificans (strain ATCC 33889 / DSM 1251) (Thiomicrospira denitrificans (strain ATCC 33889 / DSM 1251)).